A 442-amino-acid polypeptide reads, in one-letter code: Glutamate--methylamine ligase (442 aa).

The GS beta-grasp domain maps to 13–97 (NQVKYILAQF…IACDGHTHGK (85 aa)). A GS catalytic domain is found at 103–442 (TRVVLKKQLE…WEVNSYLEFF (340 aa)).

The protein belongs to the glutamine synthetase family. Type 3 subfamily. Mg(2+) serves as cofactor.

The enzyme catalyses methylamine + L-glutamate + ATP = N(5)-methyl-L-glutamine + ADP + phosphate + H(+). Functionally, catalyzes the formation of N(5)-methyl-L-glutamine from glutamate and methylamine. In Methyloversatilis universalis (strain ATCC BAA-1314 / DSM 25237 / JCM 13912 / CCUG 52030 / FAM5), this protein is Glutamate--methylamine ligase.